Consider the following 407-residue polypeptide: Keratin, type I cuticular Ha2 (407 aa).

The interval 1–55 (MPSVCMPTTYRPASCLSKTYLSSSCQPSNRRPTGCISSSMGTYGLFCEGAFNGNE) is head. Residues 55 to 366 (EKETMQVLND…GLLESEDSKL (312 aa)) enclose the IF rod domain. Positions 56 to 90 (KETMQVLNDRLANYLEKVRQLEKENAELEGKIQDV) are coil 1A. A linker 1 region spans residues 91–101 (YQGQVLTMCPD). The tract at residues 102-202 (YQSYFQTIEE…HEEEVGVLRQ (101 aa)) is coil 1B. The segment at 203–218 (QLGDRLNIEVDAAPPV) is linker 12. The interval 219–362 (DLTRMLEEMR…DTYRGLLESE (144 aa)) is coil 2. Residues 363–407 (DSKLPCNPCSTPSCQPCAPSPGVSRTVCVPHTVCVPCSPCLQTRY) form a tail region.

This sequence belongs to the intermediate filament family. As to expression, cuticle of the hair shaft.

In Mus musculus (Mouse), this protein is Keratin, type I cuticular Ha2 (Krt32).